A 327-amino-acid polypeptide reads, in one-letter code: Phenylalanine--tRNA ligase alpha subunit (327 aa).

Glu252 is a Mg(2+) binding site.

Belongs to the class-II aminoacyl-tRNA synthetase family. Phe-tRNA synthetase alpha subunit type 1 subfamily. As to quaternary structure, tetramer of two alpha and two beta subunits. Requires Mg(2+) as cofactor.

It localises to the cytoplasm. It carries out the reaction tRNA(Phe) + L-phenylalanine + ATP = L-phenylalanyl-tRNA(Phe) + AMP + diphosphate + H(+). In Vibrio vulnificus (strain CMCP6), this protein is Phenylalanine--tRNA ligase alpha subunit.